Reading from the N-terminus, the 184-residue chain is ATP-dependent protease subunit HslV (184 aa).

Thr-12 is an active-site residue. Na(+) is bound by residues Ala-166, Cys-169, and Thr-172.

The protein belongs to the peptidase T1B family. HslV subfamily. In terms of assembly, a double ring-shaped homohexamer of HslV is capped on each side by a ring-shaped HslU homohexamer. The assembly of the HslU/HslV complex is dependent on binding of ATP.

Its subcellular location is the cytoplasm. It carries out the reaction ATP-dependent cleavage of peptide bonds with broad specificity.. Its activity is regulated as follows. Allosterically activated by HslU binding. Protease subunit of a proteasome-like degradation complex believed to be a general protein degrading machinery. The sequence is that of ATP-dependent protease subunit HslV from Nitrobacter winogradskyi (strain ATCC 25391 / DSM 10237 / CIP 104748 / NCIMB 11846 / Nb-255).